Consider the following 518-residue polypeptide: Nif-specific regulatory protein (518 aa).

The region spanning 35–176 (NTARALAAIL…MVANLISQPL (142 aa)) is the GAF domain. One can recognise a Sigma-54 factor interaction domain in the interval 205–432 (VGKSQAMRQT…LENCLERASV (228 aa)). Residues 232–239 (GESGTGKE) and 295–304 (ADGGTLFLDE) each bind ATP. Residues 433-475 (MTDEGLIDRDVILFNHHESPALSVKPGLPLATDESWLDQELDE) form an inter-domain linker region. Residues 476 to 518 (RQRVIAALEKTGWVQAKAARLLGMTPRQIAYRIQIMDINMHRI) form a C-terminal DNA-binding domain region. The H-T-H motif DNA-binding region spans 490–509 (QAKAARLLGMTPRQIAYRIQ).

Interacts with sigma-54.

Its function is as follows. Required for activation of most nif operons, which are directly involved in nitrogen fixation. This is Nif-specific regulatory protein (nifA) from Enterobacter agglomerans (Erwinia herbicola).